Here is a 148-residue protein sequence, read N- to C-terminus: RING finger protein 24 (148 aa).

A helical transmembrane segment spans residues 24-44 (IYIVVFGTAIFVFILSLLFCC). The segment at 78–119 (CAVCLEDFKPRDELGICPCKHAFHRKCLIKWLEVRKVCPLCN) adopts an RING-type zinc-finger fold.

As to quaternary structure, interacts with TRPC1, TRPC3, TRPC4, TRPC5, TRPC6 and TRPC7.

The protein resides in the golgi apparatus membrane. In terms of biological role, may play a role in TRPCs intracellular trafficking. The protein is RING finger protein 24 (RNF24) of Homo sapiens (Human).